The primary structure comprises 563 residues: Probable Xaa-Pro aminopeptidase PEPP (563 aa).

Residues Asp-331, Asp-342, Glu-491, and Glu-532 each contribute to the Mn(2+) site.

Belongs to the peptidase M24B family. It depends on Mn(2+) as a cofactor.

It carries out the reaction Release of any N-terminal amino acid, including proline, that is linked to proline, even from a dipeptide or tripeptide.. In terms of biological role, catalyzes the removal of a penultimate prolyl residue from the N-termini of peptides. The sequence is that of Probable Xaa-Pro aminopeptidase PEPP (PEPP) from Verticillium alfalfae (strain VaMs.102 / ATCC MYA-4576 / FGSC 10136) (Verticillium wilt of alfalfa).